The chain runs to 393 residues: Alpha-1,2 mannosyltransferase KTR1 (393 aa).

The Cytoplasmic portion of the chain corresponds to 1–16 (MAKIMIPASKQPVYKK). The helical; Signal-anchor for type II membrane protein transmembrane segment at 17-34 (LGLLLVAVFTVYVFFHGA) threads the bilayer. Residues 35 to 68 (QYARGSAPSPKYSTVLSSGSGYKYSKVELPKYTG) form a stem region region. Topologically, residues 35 to 393 (QYARGSAPSP…KPAGWQNHIG (359 aa)) are lumenal. Residues 69 to 393 (PREKATFVTL…KPAGWQNHIG (325 aa)) form a catalytic region. Residue asparagine 120 is glycosylated (N-linked (GlcNAc...) asparagine). Glutamate 280 serves as the catalytic Nucleophile.

It belongs to the glycosyltransferase 15 family. Mn(2+) serves as cofactor. Post-translationally, N-glycosylated.

It localises to the golgi apparatus membrane. It participates in protein modification; protein glycosylation. Its function is as follows. Mannosyltransferase that transfers a mannose residue from GDP-mannose to a range of acceptors in vitro, forming an alpha-(1-&gt;2)-D-mannosyl-D-mannose linkage. This is Alpha-1,2 mannosyltransferase KTR1 (KTR1) from Saccharomyces cerevisiae (strain ATCC 204508 / S288c) (Baker's yeast).